The following is a 115-amino-acid chain: Large ribosomal subunit protein uL22 (115 aa).

Belongs to the universal ribosomal protein uL22 family. Part of the 50S ribosomal subunit.

Its function is as follows. This protein binds specifically to 23S rRNA; its binding is stimulated by other ribosomal proteins, e.g. L4, L17, and L20. It is important during the early stages of 50S assembly. It makes multiple contacts with different domains of the 23S rRNA in the assembled 50S subunit and ribosome. In terms of biological role, the globular domain of the protein is located near the polypeptide exit tunnel on the outside of the subunit, while an extended beta-hairpin is found that lines the wall of the exit tunnel in the center of the 70S ribosome. The chain is Large ribosomal subunit protein uL22 from Thioalkalivibrio sulfidiphilus (strain HL-EbGR7).